Here is a 511-residue protein sequence, read N- to C-terminus: Xylose import ATP-binding protein XylG (511 aa).

2 ABC transporter domains span residues 6–244 and 261–506; these read LEMR…VGRE and FEAR…IGKP. 38 to 45 is a binding site for ATP; that stretch reads GENGAGKS.

Belongs to the ABC transporter superfamily. Xylose importer (TC 3.A.1.2.4) family. In terms of assembly, the complex is composed of two ATP-binding proteins (XylG), two transmembrane proteins (XylH) and a solute-binding protein (XylF).

The protein resides in the cell inner membrane. It catalyses the reaction D-xylose(out) + ATP + H2O = D-xylose(in) + ADP + phosphate + H(+). Functionally, part of the ABC transporter complex XylFGH involved in xylose import. Responsible for energy coupling to the transport system. This is Xylose import ATP-binding protein XylG from Brucella suis biovar 1 (strain 1330).